The primary structure comprises 111 residues: Probable 4-amino-4-deoxy-L-arabinose-phosphoundecaprenol flippase subunit ArnE (111 aa).

The Cytoplasmic portion of the chain corresponds to 1–37 (MIWLTLVFASLLSVAGQLCQKQATCFVAINKRRKHIA). The chain crosses the membrane as a helical span at residues 38–58 (LWLGLALACLGLAMVLWLLVL). Residues 40-109 (LGLALACLGL…IIGGIVILGS (70 aa)) form the EamA domain. Topologically, residues 59–60 (QN) are periplasmic. Residues 61–81 (VPVGIAYPMLSLNFVWVTLAA) form a helical membrane-spanning segment. Over 82 to 87 (VKLWHE) the chain is Cytoplasmic. The chain crosses the membrane as a helical span at residues 88-108 (PVSPRHWCGVAFIIGGIVILG). Over 109–111 (STV) the chain is Periplasmic.

It belongs to the ArnE family. Heterodimer of ArnE and ArnF.

The protein localises to the cell inner membrane. The protein operates within bacterial outer membrane biogenesis; lipopolysaccharide biosynthesis. In terms of biological role, translocates 4-amino-4-deoxy-L-arabinose-phosphoundecaprenol (alpha-L-Ara4N-phosphoundecaprenol) from the cytoplasmic to the periplasmic side of the inner membrane. The polypeptide is Probable 4-amino-4-deoxy-L-arabinose-phosphoundecaprenol flippase subunit ArnE (Escherichia coli (strain 55989 / EAEC)).